A 672-amino-acid chain; its full sequence is Negative growth regulatory protein NGR1 (672 aa).

M1 carries the N-acetylmethionine modification. Composition is skewed to polar residues over residues 1-13 (MMSNVANASQRQE) and 23-32 (SSTVETSTEP). Disordered regions lie at residues 1 to 40 (MMSNVANASQRQENPYIIPLPPSSTVETSTEPPRTLWMGD) and 77 to 102 (SSTSSSNNNTSEENAENQQSASNSTD). M2 bears the N-acetylserine mark. 3 consecutive RRM domains span residues 36–159 (LWMG…YSPT), 192–271 (FSLF…YATP), and 360–432 (TTVF…WGRP). The span at 77–96 (SSTSSSNNNTSEENAENQQS) shows a compositional bias: low complexity. S524 carries the phosphoserine modification. A disordered region spans residues 640-672 (LNIAPNSNNSKSSIMNKHPNRNNVPPIHPSLLH). Residues 645–656 (NSNNSKSSIMNK) are compositionally biased toward low complexity.

Functionally, may be an RNA-binding protein involved in control of an RNA processing pathway that influences the regulation of cell growth in early log phase. Can bind to RNA and single-stranded DNA but not double-stranded DNA. This Saccharomyces cerevisiae (strain ATCC 204508 / S288c) (Baker's yeast) protein is Negative growth regulatory protein NGR1 (NGR1).